A 204-amino-acid chain; its full sequence is Thymidylate kinase (204 aa).

7 to 14 (GGEGVGKT) provides a ligand contact to ATP.

The protein belongs to the thymidylate kinase family.

The catalysed reaction is dTMP + ATP = dTDP + ADP. Functionally, phosphorylation of dTMP to form dTDP in both de novo and salvage pathways of dTTP synthesis. This chain is Thymidylate kinase, found in Synechococcus sp. (strain JA-3-3Ab) (Cyanobacteria bacterium Yellowstone A-Prime).